The sequence spans 346 residues: N-acetyl-gamma-glutamyl-phosphate reductase (346 aa).

C149 is a catalytic residue.

This sequence belongs to the NAGSA dehydrogenase family. Type 1 subfamily.

The protein localises to the cytoplasm. It catalyses the reaction N-acetyl-L-glutamate 5-semialdehyde + phosphate + NADP(+) = N-acetyl-L-glutamyl 5-phosphate + NADPH + H(+). It participates in amino-acid biosynthesis; L-arginine biosynthesis; N(2)-acetyl-L-ornithine from L-glutamate: step 3/4. Its function is as follows. Catalyzes the NADPH-dependent reduction of N-acetyl-5-glutamyl phosphate to yield N-acetyl-L-glutamate 5-semialdehyde. This is N-acetyl-gamma-glutamyl-phosphate reductase from Geobacter sp. (strain M21).